The chain runs to 532 residues: Bifunctional purine biosynthesis protein PurH (532 aa).

The region spanning 1 to 148 (MQTPKPIKRA…KNHKDVTIVV (148 aa)) is the MGS-like domain.

It belongs to the PurH family.

It catalyses the reaction (6R)-10-formyltetrahydrofolate + 5-amino-1-(5-phospho-beta-D-ribosyl)imidazole-4-carboxamide = 5-formamido-1-(5-phospho-D-ribosyl)imidazole-4-carboxamide + (6S)-5,6,7,8-tetrahydrofolate. It carries out the reaction IMP + H2O = 5-formamido-1-(5-phospho-D-ribosyl)imidazole-4-carboxamide. The protein operates within purine metabolism; IMP biosynthesis via de novo pathway; 5-formamido-1-(5-phospho-D-ribosyl)imidazole-4-carboxamide from 5-amino-1-(5-phospho-D-ribosyl)imidazole-4-carboxamide (10-formyl THF route): step 1/1. It functions in the pathway purine metabolism; IMP biosynthesis via de novo pathway; IMP from 5-formamido-1-(5-phospho-D-ribosyl)imidazole-4-carboxamide: step 1/1. The polypeptide is Bifunctional purine biosynthesis protein PurH (Alteromonas mediterranea (strain DSM 17117 / CIP 110805 / LMG 28347 / Deep ecotype)).